Here is a 635-residue protein sequence, read N- to C-terminus: Cilia- and flagella-associated protein 206 (635 aa).

This sequence belongs to the CFAP206 family.

The protein resides in the cytoplasm. Its subcellular location is the cytoskeleton. The protein localises to the cilium axoneme. May regulate cilium motility through its role in the assembly of the axonemal RS2 radial spoke. This chain is Cilia- and flagella-associated protein 206, found in Tetrahymena thermophila (strain SB210).